The following is a 511-amino-acid chain: ATP synthase subunit alpha (511 aa).

ATP is bound at residue glycine 170–threonine 177.

It belongs to the ATPase alpha/beta chains family. In terms of assembly, F-type ATPases have 2 components, CF(1) - the catalytic core - and CF(0) - the membrane proton channel. CF(1) has five subunits: alpha(3), beta(3), gamma(1), delta(1), epsilon(1). CF(0) has three main subunits: a(1), b(2) and c(9-12). The alpha and beta chains form an alternating ring which encloses part of the gamma chain. CF(1) is attached to CF(0) by a central stalk formed by the gamma and epsilon chains, while a peripheral stalk is formed by the delta and b chains.

It is found in the cell inner membrane. It catalyses the reaction ATP + H2O + 4 H(+)(in) = ADP + phosphate + 5 H(+)(out). Its function is as follows. Produces ATP from ADP in the presence of a proton gradient across the membrane. The alpha chain is a regulatory subunit. The polypeptide is ATP synthase subunit alpha (Pelagibacter ubique (strain HTCC1062)).